Consider the following 539-residue polypeptide: Acid-sensing ion channel 4-A (539 aa).

Over 1 to 68 the chain is Cytoplasmic; it reads MPIEFVCKIK…SGRLGVRQTL (68 aa). A helical membrane pass occupies residues 69–89; the sequence is WALAFLVSLALFLYQAAKCAI. Over 90–432 the chain is Extracellular; sequence SYLEHPHVTA…EQKKAYDVAG (343 aa). 2 disulfide bridges follow: Cys-116-Cys-200 and Cys-178-Cys-185. Residues Asn-136, Asn-165, Asn-179, Asn-184, Asn-206, and Asn-241 are each glycosylated (N-linked (GlcNAc...) asparagine). 5 disulfides stabilise this stretch: Cys-294/Cys-369, Cys-313/Cys-365, Cys-317/Cys-363, Cys-326/Cys-347, and Cys-328/Cys-340. N-linked (GlcNAc...) asparagine glycosylation is present at Asn-370. Residues 433-453 traverse the membrane as a helical segment; that stretch reads LLGDIGGQMGLFIGASVLTIL. The short motif at 446–448 is the GAS motif; ion selectivity filter element; that stretch reads GAS. Residues 454 to 539 are Cytoplasmic-facing; sequence EILDYVYEVI…HHRVSEDFAC (86 aa). Positions 474-494 are disordered; that stretch reads QRDDKKQTQQQQQASTVATVN.

This sequence belongs to the amiloride-sensitive sodium channel (TC 1.A.6) family. ASIC4 subfamily. Homotrimer. Heterotrimer; with other ASIC proteins producing functional channels. As to expression, expressed in central nervous system.

It localises to the cell membrane. It carries out the reaction Na(+)(in) = Na(+)(out). Inhibited by the diuretic drug amiloride. Functionally, could form pH-gated trimeric sodium channels and function as a postsynaptic excitatory receptors in the nervous system. This Danio rerio (Zebrafish) protein is Acid-sensing ion channel 4-A.